A 98-amino-acid polypeptide reads, in one-letter code: uncharacterized protein (98 aa).

This is an uncharacterized protein from Frog virus 3 (isolate Goorha) (FV-3).